The following is a 189-amino-acid chain: Cancer/testis antigen family 45 member A10 (189 aa).

It belongs to the CT45 family.

It is found in the nucleus. This Homo sapiens (Human) protein is Cancer/testis antigen family 45 member A10.